Reading from the N-terminus, the 398-residue chain is Fe-regulated protein 8 (398 aa).

In terms of biological role, protein of unknown function; part of the gene cluster that mediates the biosynthesis of siderophore ferrichrome A which is contributing to organismal virulence. This chain is Fe-regulated protein 8, found in Mycosarcoma maydis (Corn smut fungus).